Reading from the N-terminus, the 181-residue chain is Large ribosomal subunit protein uL10 (181 aa).

This sequence belongs to the universal ribosomal protein uL10 family. As to quaternary structure, part of the ribosomal stalk of the 50S ribosomal subunit. The N-terminus interacts with L11 and the large rRNA to form the base of the stalk. The C-terminus forms an elongated spine to which L12 dimers bind in a sequential fashion forming a multimeric L10(L12)X complex.

In terms of biological role, forms part of the ribosomal stalk, playing a central role in the interaction of the ribosome with GTP-bound translation factors. The polypeptide is Large ribosomal subunit protein uL10 (Acidobacterium capsulatum (strain ATCC 51196 / DSM 11244 / BCRC 80197 / JCM 7670 / NBRC 15755 / NCIMB 13165 / 161)).